The sequence spans 87 residues: Large ribosomal subunit protein bL31B (87 aa).

This sequence belongs to the bacterial ribosomal protein bL31 family. Type B subfamily. Part of the 50S ribosomal subunit.

The protein is Large ribosomal subunit protein bL31B of Salinispora arenicola (strain CNS-205).